A 159-amino-acid chain; its full sequence is Probable cyclic pyranopterin monophosphate synthase (159 aa).

Substrate-binding positions include 74–76 and 110–111; these read MCH and ME. The active site involves D125.

Belongs to the MoaC family. Homohexamer; trimer of dimers.

It catalyses the reaction (8S)-3',8-cyclo-7,8-dihydroguanosine 5'-triphosphate = cyclic pyranopterin phosphate + diphosphate. It functions in the pathway cofactor biosynthesis; molybdopterin biosynthesis. Catalyzes the conversion of (8S)-3',8-cyclo-7,8-dihydroguanosine 5'-triphosphate to cyclic pyranopterin monophosphate (cPMP). The polypeptide is Probable cyclic pyranopterin monophosphate synthase (Methanococcoides burtonii (strain DSM 6242 / NBRC 107633 / OCM 468 / ACE-M)).